A 276-amino-acid polypeptide reads, in one-letter code: Large ribosomal subunit protein uL2 (276 aa).

Residues 224-276 form a disordered region; it reads AMNPIDHPHGGGEGKTSGGRNPVTPWGVSTKGKKTRKKNKSSNKYIKRVSDKG. Residues 254–270 show a composition bias toward basic residues; it reads KGKKTRKKNKSSNKYIK.

It belongs to the universal ribosomal protein uL2 family. In terms of assembly, part of the 50S ribosomal subunit. Forms a bridge to the 30S subunit in the 70S ribosome.

Functionally, one of the primary rRNA binding proteins. Required for association of the 30S and 50S subunits to form the 70S ribosome, for tRNA binding and peptide bond formation. It has been suggested to have peptidyltransferase activity; this is somewhat controversial. Makes several contacts with the 16S rRNA in the 70S ribosome. In Ehrlichia ruminantium (strain Gardel), this protein is Large ribosomal subunit protein uL2.